The sequence spans 512 residues: uncharacterized protein (512 aa).

Transmembrane regions (helical) follow at residues 20–40 (IFPV…IYIW) and 222–242 (GIAL…FGYI). One can recognise a Histidine kinase domain in the interval 297 to 512 (EQLIQSIEQT…TLMCYQIPLV (216 aa)). Phosphohistidine; by autocatalysis is present on His325.

Autophosphorylated.

The protein resides in the cell membrane. It carries out the reaction ATP + protein L-histidine = ADP + protein N-phospho-L-histidine.. In terms of biological role, probable member of the two-component regulatory system SE_0166/SE_0165. May activate SE_0165 by phosphorylation. This is an uncharacterized protein from Staphylococcus epidermidis (strain ATCC 12228 / FDA PCI 1200).